A 471-amino-acid chain; its full sequence is Heat shock 70 kDa protein 13 (471 aa).

Residues 1–22 (MAGEMTILGSAVLTLLLAGYLA) form the signal peptide. Residues 315 to 337 (ENDRKGPPTSDSELPKDKFSQAN) form a disordered region.

This sequence belongs to the heat shock protein 70 family. As to quaternary structure, binds UBQLN2.

It localises to the microsome. The protein localises to the endoplasmic reticulum. Functionally, has peptide-independent ATPase activity. The chain is Heat shock 70 kDa protein 13 (HSPA13) from Bos taurus (Bovine).